The sequence spans 162 residues: Ubiquitin D (162 aa).

2 consecutive Ubiquitin-like domains span residues Ser3–Val78 and Leu87–Thr160.

The protein belongs to the ubiquitin D family. As to quaternary structure, interacts directly with the 26S proteasome. Interacts with NUB1; this interaction facilitates the linking of UBD-conjugated target protein to the proteasome complex and accelerates its own degradation and that of its conjugates. Interacts (via ubiquitin-like 1 domain) with the spindle checkpoint protein MAD2L1 during mitosis. Present in aggresomes of proteasome inhibited cells. Interacts with HDAC6 under proteasome impairment conditions. Forms a thioester with UBA6 in cells stimulated with tumor necrosis factor-alpha (TNFa) and interferon-gamma (IFNg). Interacts with SQSTM1 and TP53/p53. In terms of processing, can be acetylated. As to expression, mostly expressed in thymus and intestine.

The protein localises to the nucleus. Its subcellular location is the cytoplasm. Functionally, ubiquitin-like protein modifier which can be covalently attached to target proteins and subsequently leads to their degradation by the 26S proteasome, in a NUB1-dependent manner. Conjugation to the target protein is activated by UBA6 via adenylation of its C-terminal glycine. Probably functions as a survival factor. Promotes the expression of the proteasome subunit beta type-9 (PSMB9/LMP2). Regulates TNF-alpha-induced and LPS-mediated activation of the central mediator of innate immunity NF-kappa-B by promoting TNF-alpha-mediated proteasomal degradation of ubiquitinated-I-kappa-B-alpha. Required for TNF-alpha-induced p65 nuclear translocation in renal tubular epithelial cells (RTECs). May be involved in dendritic cell (DC) maturation, the process by which immature dendritic cells differentiate into fully competent antigen-presenting cells that initiate T-cell responses. Mediates mitotic non-disjunction and chromosome instability, in long-term in vitro culture and cancers, by abbreviating mitotic phase and impairing the kinetochore localization of MAD2L1 during the prometaphase stage of the cell cycle. May be involved in the formation of aggresomes when proteasome is saturated or impaired. Mediates apoptosis in a caspase-dependent manner, especially in renal epithelium and tubular cells during renal diseases. The protein is Ubiquitin D (Ubd) of Mus musculus (Mouse).